Consider the following 124-residue polypeptide: Small ribosomal subunit protein uS12 (124 aa).

D89 bears the 3-methylthioaspartic acid mark.

This sequence belongs to the universal ribosomal protein uS12 family. As to quaternary structure, part of the 30S ribosomal subunit. Contacts proteins S8 and S17. May interact with IF1 in the 30S initiation complex.

Functionally, with S4 and S5 plays an important role in translational accuracy. Its function is as follows. Interacts with and stabilizes bases of the 16S rRNA that are involved in tRNA selection in the A site and with the mRNA backbone. Located at the interface of the 30S and 50S subunits, it traverses the body of the 30S subunit contacting proteins on the other side and probably holding the rRNA structure together. The combined cluster of proteins S8, S12 and S17 appears to hold together the shoulder and platform of the 30S subunit. The chain is Small ribosomal subunit protein uS12 from Treponema pallidum subsp. pallidum (strain SS14).